The chain runs to 41 residues: Tachystatin-C (41 aa).

Intrachain disulfides connect Cys12-Cys28, Cys19-Cys33, and Cys27-Cys38.

In terms of tissue distribution, granular hemocytes, small secretory granules.

It localises to the secreted. Its function is as follows. Binds to chitin. Shows strong activity against E.coli (IC(50) is 1.2 ug/ml). Is also very active against S.aureus (IC(50) is 0.8 ug/ml), C.albicans (IC(50) is 0.9 ug/ml) and P.pastoris (IC(50) is 0.3 ug/ml). Binds to chitin (5.2 uM are required to obtain 50% of binding). Causes hemolysis on sheep erythrocytes, probably by forming ion-permeable pores. This chain is Tachystatin-C, found in Tachypleus tridentatus (Japanese horseshoe crab).